Consider the following 130-residue polypeptide: Anti-adapter protein IraD (130 aa).

It belongs to the GpW/Gp25 family. IraD subfamily. In terms of assembly, interacts with RssB.

The protein resides in the cytoplasm. Functionally, inhibits RpoS proteolysis by regulating RssB activity, thereby increasing the stability of the sigma stress factor RpoS during oxidative stress. Its effect on RpoS stability is due to its interaction with RssB, which probably blocks the interaction of RssB with RpoS, and the consequent delivery of the RssB-RpoS complex to the ClpXP protein degradation pathway. The polypeptide is Anti-adapter protein IraD (Escherichia coli O7:K1 (strain IAI39 / ExPEC)).